A 250-amino-acid polypeptide reads, in one-letter code: ATP synthase subunit a (250 aa).

6 helical membrane passes run 29–49 (ASLF…FATS), 84–104 (FFPM…LGMM), 114–134 (IVVT…YGFY), 143–163 (LFVP…IEVI), 189–209 (VFAG…GGAL), and 216–236 (VALT…FAVL).

The protein belongs to the ATPase A chain family. In terms of assembly, F-type ATPases have 2 components, CF(1) - the catalytic core - and CF(0) - the membrane proton channel. CF(1) has five subunits: alpha(3), beta(3), gamma(1), delta(1), epsilon(1). CF(0) has three main subunits: a(1), b(2) and c(9-12). The alpha and beta chains form an alternating ring which encloses part of the gamma chain. CF(1) is attached to CF(0) by a central stalk formed by the gamma and epsilon chains, while a peripheral stalk is formed by the delta and b chains.

The protein localises to the cell inner membrane. In terms of biological role, key component of the proton channel; it plays a direct role in the translocation of protons across the membrane. This chain is ATP synthase subunit a, found in Allorhizobium ampelinum (strain ATCC BAA-846 / DSM 112012 / S4) (Agrobacterium vitis (strain S4)).